We begin with the raw amino-acid sequence, 62 residues long: Large ribosomal subunit protein bL28 (62 aa).

Belongs to the bacterial ribosomal protein bL28 family.

The polypeptide is Large ribosomal subunit protein bL28 (Phytoplasma mali (strain AT)).